Consider the following 238-residue polypeptide: Nucleoside diphosphate kinase III, chloroplastic/mitochondrial (238 aa).

Residues 1 to 85 constitute a chloroplast and mitochondrion transit peptide; that stretch reads MSSQICRSAS…YMIQDQEVLA (85 aa). Residues Lys-96, Phe-144, Arg-172, Thr-178, Arg-189, and Asn-199 each contribute to the ATP site. Catalysis depends on His-202, which acts as the Pros-phosphohistidine intermediate.

This sequence belongs to the NDK family. Homohexamer. The cofactor is Mg(2+).

It is found in the plastid. The protein resides in the chloroplast thylakoid lumen. Its subcellular location is the mitochondrion intermembrane space. It carries out the reaction a 2'-deoxyribonucleoside 5'-diphosphate + ATP = a 2'-deoxyribonucleoside 5'-triphosphate + ADP. The catalysed reaction is a ribonucleoside 5'-diphosphate + ATP = a ribonucleoside 5'-triphosphate + ADP. Functionally, major role in the synthesis of nucleoside triphosphates other than ATP. The ATP gamma phosphate is transferred to the NDP beta phosphate via a ping-pong mechanism, using a phosphorylated active-site intermediate. Shows the highest specificity towards GDP. The polypeptide is Nucleoside diphosphate kinase III, chloroplastic/mitochondrial (NDPK3) (Arabidopsis thaliana (Mouse-ear cress)).